A 259-amino-acid polypeptide reads, in one-letter code: uncharacterized protein (259 aa).

This is an uncharacterized protein from Schizosaccharomyces pombe (strain 972 / ATCC 24843) (Fission yeast).